The primary structure comprises 248 residues: Ubiquinone/menaquinone biosynthesis C-methyltransferase UbiE (248 aa).

S-adenosyl-L-methionine is bound by residues T71, D92, and 120-121 (DA).

It belongs to the class I-like SAM-binding methyltransferase superfamily. MenG/UbiE family.

The enzyme catalyses a 2-demethylmenaquinol + S-adenosyl-L-methionine = a menaquinol + S-adenosyl-L-homocysteine + H(+). It carries out the reaction a 2-methoxy-6-(all-trans-polyprenyl)benzene-1,4-diol + S-adenosyl-L-methionine = a 5-methoxy-2-methyl-3-(all-trans-polyprenyl)benzene-1,4-diol + S-adenosyl-L-homocysteine + H(+). It participates in quinol/quinone metabolism; menaquinone biosynthesis; menaquinol from 1,4-dihydroxy-2-naphthoate: step 2/2. The protein operates within cofactor biosynthesis; ubiquinone biosynthesis. Its function is as follows. Methyltransferase required for the conversion of demethylmenaquinol (DMKH2) to menaquinol (MKH2) and the conversion of 2-polyprenyl-6-methoxy-1,4-benzoquinol (DDMQH2) to 2-polyprenyl-3-methyl-6-methoxy-1,4-benzoquinol (DMQH2). This Methylococcus capsulatus (strain ATCC 33009 / NCIMB 11132 / Bath) protein is Ubiquinone/menaquinone biosynthesis C-methyltransferase UbiE.